A 147-amino-acid polypeptide reads, in one-letter code: Hemoglobin subunit beta (147 aa).

The Globin domain occupies 3-147 (EWTDFERATI…VVSSLGRQYH (145 aa)). Positions 64 and 93 each coordinate heme b.

It belongs to the globin family. As to quaternary structure, hb 1 is a heterotetramer of two alpha-1 and two beta chains. Hb 2 is a heterotetramer of two alpha-2 and two beta chains. In terms of tissue distribution, red blood cells.

Functionally, involved in oxygen transport from gills to the various peripheral tissues. The chain is Hemoglobin subunit beta (hbb) from Cottoperca gobio (Frogmouth).